Consider the following 319-residue polypeptide: 2,3,4,5-tetrahydropyridine-2,6-dicarboxylate N-succinyltransferase (319 aa).

Residues Asp-167 and Glu-184 each contribute to the Mg(2+) site. The active-site Acyl-anhydride intermediate is the Glu-200. Succinyl-CoA-binding positions include Arg-202, Gly-217, Ser-220, Ala-243, 258 to 259, and Lys-278; that span reads EA.

Belongs to the type 2 tetrahydrodipicolinate N-succinyltransferase family. Homotrimer.

It localises to the cytoplasm. It catalyses the reaction (S)-2,3,4,5-tetrahydrodipicolinate + succinyl-CoA + H2O = (S)-2-succinylamino-6-oxoheptanedioate + CoA. The protein operates within amino-acid biosynthesis; L-lysine biosynthesis via DAP pathway; LL-2,6-diaminopimelate from (S)-tetrahydrodipicolinate (succinylase route): step 1/3. Functionally, catalyzes the conversion of the cyclic tetrahydrodipicolinate (THDP) into the acyclic N-succinyl-L-2-amino-6-oxopimelate using succinyl-CoA. This is 2,3,4,5-tetrahydropyridine-2,6-dicarboxylate N-succinyltransferase from Salinispora tropica (strain ATCC BAA-916 / DSM 44818 / JCM 13857 / NBRC 105044 / CNB-440).